A 413-amino-acid polypeptide reads, in one-letter code: Mitochondrial carrier protein MTM1 (413 aa).

3 Solcar repeats span residues 59–193 (IGFT…FRNR), 205–305 (MTFC…IKKR), and 318–406 (GVFG…VKYV). Helical transmembrane passes span 65–85 (VFSA…LDVV), 170–190 (NAGL…YDMF), 204–226 (AMTF…TVCY), 284–304 (QLAR…PIKK), 316–336 (LVGV…IAAA), and 378–399 (LFMG…VVSF).

This sequence belongs to the mitochondrial carrier (TC 2.A.29) family. As to expression, ubiquitous.

The protein localises to the mitochondrion inner membrane. Involved in the mitochondrial activation of MSD1 by specifically facilitating insertion of the essential manganese cofactor. Has the ability to activate iron regulon in an iron-dependent manner. The sequence is that of Mitochondrial carrier protein MTM1 (MTM1) from Arabidopsis thaliana (Mouse-ear cress).